Reading from the N-terminus, the 252-residue chain is Thiamine thiazole synthase (252 aa).

Residues S35, 54-55 (EK), G62, V126, and 152-154 (HVD) each bind NAD(+). 2 residues coordinate Fe cation: D154 and H169. M217 serves as a coordination point for NAD(+). Residue R227 participates in glycine binding.

Belongs to the THI4 family. As to quaternary structure, homooctamer; tetramer of dimers. The cofactor is Fe(2+).

The enzyme catalyses hydrogen sulfide + glycine + NAD(+) = ADP-5-ethyl-4-methylthiazole-2-carboxylate + nicotinamide + 3 H2O + H(+). It functions in the pathway cofactor biosynthesis; thiamine diphosphate biosynthesis. Its function is as follows. Involved in the biosynthesis of the thiazole moiety of thiamine. Catalyzes the conversion of NAD and glycine to adenosine diphosphate 5-(2-hydroxyethyl)-4-methylthiazole-2-carboxylate (ADT), an adenylated thiazole intermediate, using free sulfide as a source of sulfur. The chain is Thiamine thiazole synthase from Pyrococcus horikoshii (strain ATCC 700860 / DSM 12428 / JCM 9974 / NBRC 100139 / OT-3).